Reading from the N-terminus, the 802-residue chain is Leucine--tRNA ligase (802 aa).

The 'HIGH' region signature appears at 40 to 51 (PYPSGAGLHVGH). The short motif at 576-580 (KMSKS) is the 'KMSKS' region element. Position 579 (K579) interacts with ATP.

It belongs to the class-I aminoacyl-tRNA synthetase family.

Its subcellular location is the cytoplasm. The enzyme catalyses tRNA(Leu) + L-leucine + ATP = L-leucyl-tRNA(Leu) + AMP + diphosphate. The protein is Leucine--tRNA ligase of Bacillus thuringiensis subsp. konkukian (strain 97-27).